We begin with the raw amino-acid sequence, 445 residues long: Retrovirus-related Pol polyprotein from type-1 retrotransposable element R2 (445 aa).

Residues 1–114 (QPSVFNLVKW…LSRDDSLAKA (114 aa)) enclose the Reverse transcriptase domain. A nucleic acid-binding endonuclease region spans residues 115-445 (MLASAGPAAE…GATPRQLIEY (331 aa)). Residues 380–389 (GPRPAHHHQP) are compositionally biased toward basic residues. The interval 380-445 (GPRPAHHHQP…GATPRQLIEY (66 aa)) is disordered. Positions 396 to 405 (ATANTGTLQS) are enriched in polar residues.

The catalysed reaction is DNA(n) + a 2'-deoxyribonucleoside 5'-triphosphate = DNA(n+1) + diphosphate. In Popillia japonica (Japanese beetle), this protein is Retrovirus-related Pol polyprotein from type-1 retrotransposable element R2.